The following is a 153-amino-acid chain: UPF0260 protein YcgN (153 aa).

It belongs to the UPF0260 family.

In Salmonella dublin (strain CT_02021853), this protein is UPF0260 protein YcgN.